A 342-amino-acid chain; its full sequence is WW domain binding protein 1-like (342 aa).

A helical transmembrane segment spans residues 42 to 62 (LWWFWLVWTIIIILSCCCVCH). Disordered stretches follow at residues 133–247 (LPPQ…RRFT) and 292–320 (PGDE…RPPA). Positions 158-173 (SSPLSEPSRSSTRPPS) are enriched in low complexity. S173 carries the post-translational modification Phosphoserine. Over residues 212-240 (LDKDAECREELLKDDSSEHGAPDSKEKTP) the composition is skewed to basic and acidic residues.

Its subcellular location is the membrane. In Homo sapiens (Human), this protein is WW domain binding protein 1-like (WBP1L).